Consider the following 252-residue polypeptide: 5-oxoprolinase subunit A (252 aa).

It belongs to the LamB/PxpA family. As to quaternary structure, forms a complex composed of PxpA, PxpB and PxpC.

The catalysed reaction is 5-oxo-L-proline + ATP + 2 H2O = L-glutamate + ADP + phosphate + H(+). In terms of biological role, catalyzes the cleavage of 5-oxoproline to form L-glutamate coupled to the hydrolysis of ATP to ADP and inorganic phosphate. The protein is 5-oxoprolinase subunit A of Bacillus cytotoxicus (strain DSM 22905 / CIP 110041 / 391-98 / NVH 391-98).